Here is a 211-residue protein sequence, read N- to C-terminus: MKGKFIVFEGIDGSGKTTQINQLSKWLISSDLIPENNKLVITREPGGTKLGKSIRSLLLDTSIEKSPDSITELLLYAADRSQHINEIIRPTLDQGDWVISDRFCGSTLAYQGYGRKLDINLIKDLEAIATQGIAPDITFLLDIPIEESIRRRRNRKDDRIEKEGREFLSNVSLGFQALSEDSNWKKISAIDSKEKIISEIKSEIKKLIKNK.

ATP is bound at residue 10–17; the sequence is GIDGSGKT.

It belongs to the thymidylate kinase family.

It catalyses the reaction dTMP + ATP = dTDP + ADP. Functionally, phosphorylation of dTMP to form dTDP in both de novo and salvage pathways of dTTP synthesis. This Prochlorococcus marinus (strain NATL2A) protein is Thymidylate kinase.